Consider the following 69-residue polypeptide: Small integral membrane protein 20 (69 aa).

The Mitochondrial matrix segment spans residues 1–8; sequence MAAARNLR. Residues 9–29 traverse the membrane as a helical segment; that stretch reads TALIFGGFISMVGAAFYPIYF. Residues 30-69 lie on the Mitochondrial intermembrane side of the membrane; the sequence is RPLMRLEEYQKEQAVNRAGIVQEDVQPPGLKVWSDPFGRK. Phe-66 carries the post-translational modification Phenylalanine amide.

In terms of assembly, component of the MITRAC (mitochondrial translation regulation assembly intermediate of cytochrome c oxidase complex) complex, the core components of this complex being COA3/MITRAC12 and COX14. Interacts with COA3/MITRAC12 and COX4I1. Directly interacts with newly synthesized MT-CO1/COX1. In terms of tissue distribution, highly expressed in the hypothalamus, the spinal cord, and sensory ganglia (at protein level). Also expressed on in the epidermis and dermis layers of the skin (at protein level). Expressed in preadipocytes and adipocytes (at protein level). Expressed in the ovary, specifically in granulosa cells of follicles that have passed the primary stage and in oocytes (at protein level).

It localises to the mitochondrion inner membrane. The protein localises to the secreted. In terms of biological role, component of the MITRAC (mitochondrial translation regulation assembly intermediate of cytochrome c oxidase complex) complex, that regulates cytochrome c oxidase assembly. Promotes the progression of complex assembly after the association of MT-CO1/COX1 with COX4I1 and COX6C. Chaperone-like assembly factor required to stabilize newly synthesized MT-CO1/COX1 and to prevent its premature turnover. Functionally, peptide involved in a broad spectrum of regulatory functions. Is a ligand for GPR173. As part of the reproductive cycle, it regulates gonadotropin-releasing hormone (GnRH) signaling in the hypothalamus and pituitary gland which augments the release of luteinizing hormone. More specifically, it regulates the expression of transcription factors CEBPB and POU2F1/OCT1 through the cAMP-PKA signaling pathway, which subsequently regulate the expression of GNRHR and KISS1. Plays a protective role in memory retention through activation of GNRHR. Regulates the secretion of AVP by hypothalamic neurons. Plays a role in the transduction of the itch sensation. Induces anxiolytic effects, reducing behavior associated with anxiety. Regulates food intake as well as satiation and satiety by increasing Nucb2 expression in neurons. In the ovary, it regulates follicular growth by stimulating granulosa cell proliferation by increasing the expression of GPR173, CREB1, CYP19A1, KITLG, FSHR, and LHCGR. It also increases the production of estradiol (E2). In the heart, it regulates contractility and relaxation by activating the AKT1-NOS3 and MAPK1-MAPK3 signaling pathways. It also plays a cardioprotective role during ischemia, where it activates the SAFE and RISK pathways. Stimulates the proliferation and differentiation of preadipocytes. In pancreatic islet cells, it induces proliferation of islet cells as well as the production of INS through activation of the MAPK1-MAPK3 signaling pathways. The sequence is that of Small integral membrane protein 20 from Mus musculus (Mouse).